Reading from the N-terminus, the 406-residue chain is Elongation factor Tu-B (406 aa).

The 206-residue stretch at 10–215 folds into the tr-type G domain; the sequence is KPHVNVGTIG…AIDEYIPTPV (206 aa). A G1 region spans residues 19–26; it reads GHVDHGKT. 19–26 serves as a coordination point for GTP; that stretch reads GHVDHGKT. T26 serves as a coordination point for Mg(2+). The tract at residues 61–65 is G2; sequence GITIN. The G3 stretch occupies residues 82 to 85; sequence DCPG. Residues 82–86 and 137–140 each bind GTP; these read DCPGH and NKVD. The interval 137-140 is G4; the sequence is NKVD. The segment at 175-177 is G5; that stretch reads SAL. Position 395 is a phosphothreonine (T395).

It belongs to the TRAFAC class translation factor GTPase superfamily. Classic translation factor GTPase family. EF-Tu/EF-1A subfamily. In terms of assembly, monomer. In terms of processing, phosphorylated on a threonine.

It localises to the cytoplasm. The catalysed reaction is GTP + H2O = GDP + phosphate + H(+). Functionally, GTP hydrolase that promotes the GTP-dependent binding of aminoacyl-tRNA to the A-site of ribosomes during protein biosynthesis. Protects glycyl-tRNA(Gly) from hydrolysis by E.coli D-aminoacyl-tRNA deacylase (dtd). The polypeptide is Elongation factor Tu-B (Thermus thermophilus (strain ATCC 27634 / DSM 579 / HB8)).